Reading from the N-terminus, the 576-residue chain is Sulfite reductase [NADPH] hemoprotein beta-component (576 aa).

[4Fe-4S] cluster contacts are provided by C435, C441, C480, and C484. C484 contributes to the siroheme binding site.

Belongs to the nitrite and sulfite reductase 4Fe-4S domain family. Alpha(8)-beta(8). The alpha component is a flavoprotein, the beta component is a hemoprotein. It depends on siroheme as a cofactor. Requires [4Fe-4S] cluster as cofactor.

The catalysed reaction is hydrogen sulfide + 3 NADP(+) + 3 H2O = sulfite + 3 NADPH + 4 H(+). Its pathway is sulfur metabolism; hydrogen sulfide biosynthesis; hydrogen sulfide from sulfite (NADPH route): step 1/1. Functionally, component of the sulfite reductase complex that catalyzes the 6-electron reduction of sulfite to sulfide. This is one of several activities required for the biosynthesis of L-cysteine from sulfate. The polypeptide is Sulfite reductase [NADPH] hemoprotein beta-component (Proteus mirabilis (strain HI4320)).